The following is a 317-amino-acid chain: Lysosomal-associated transmembrane protein 4B (317 aa).

Positions alanine 25–arginine 73 are disordered. Basic and acidic residues predominate over residues aspartate 32–arginine 59. Helical transmembrane passes span isoleucine 117 to alanine 137, methionine 163 to glycine 183, tryptophan 191 to isoleucine 211, and cysteine 244 to isoleucine 264. Residues leucine 205–glutamine 221 form a required for NEDD4 interaction region.

It belongs to the LAPTM4/LAPTM5 transporter family. As to quaternary structure, homooligomer; upon reaching the lysosomes. Interacts with MCOLN1. Interacts with NEDD4; may play a role in the lysosomal sorting of LAPTM4B; enhances HGS association with NEDD4; mediates inhibition of EGFR degradation. Interacts with PIP5K1C; promotes SNX5 association with LAPTM4B; kinase activity of PIP5K1C is required; interaction is regulated by phosphatidylinositol 4,5-bisphosphate generated by PIP5K1C. Interacts with HGS; promotes HGS ubiquitination. Interacts with SNX5. Interacts with SLC3A2 and SLC7A5; recruits SLC3A2 and SLC7A5 to lysosomes to promote leucine uptake into these organelles and is required for mTORC1 activation. Interacts with LRRC32; decreases TGFB1 production in regulatory T cells. Interacts with BECN1; competes with EGFR for LAPTM4B binding; regulates EGFR activity. Interacts with EGFR; positively correlates with EGFR activation. Undergoes proteolytic cleavage following delivery to the lysosomes. In terms of processing, ubiquitinated by NEDD4.

It is found in the endomembrane system. The protein localises to the late endosome membrane. Its subcellular location is the cell membrane. The protein resides in the cell projection. It localises to the lysosome membrane. It is found in the endosome membrane. The protein localises to the endosome. Its subcellular location is the multivesicular body membrane. The protein resides in the multivesicular body lumen. Required for optimal lysosomal function. Blocks EGF-stimulated EGFR intraluminal sorting and degradation. Conversely by binding with the phosphatidylinositol 4,5-bisphosphate, regulates its PIP5K1C interaction, inhibits HGS ubiquitination and relieves LAPTM4B inhibition of EGFR degradation. Recruits SLC3A2 and SLC7A5 (the Leu transporter) to the lysosome, promoting entry of leucine and other essential amino acid (EAA) into the lysosome, stimulating activation of proton-transporting vacuolar (V)-ATPase protein pump (V-ATPase) and hence mTORC1 activation. Plays a role as negative regulator of TGFB1 production in regulatory T cells. Binds ceramide and facilitates its exit from late endosome in order to control cell death pathways. This chain is Lysosomal-associated transmembrane protein 4B, found in Homo sapiens (Human).